Consider the following 401-residue polypeptide: Argininosuccinate synthase (401 aa).

Position 9-17 (9-17) interacts with ATP; sequence AYSGGLDTS. Tyrosine 86 provides a ligand contact to L-citrulline. Glycine 116 lines the ATP pocket. Residues threonine 118, asparagine 122, and aspartate 123 each contribute to the L-aspartate site. Asparagine 122 contributes to the L-citrulline binding site. 5 residues coordinate L-citrulline: arginine 126, serine 174, serine 183, glutamate 259, and tyrosine 271.

The protein belongs to the argininosuccinate synthase family. Type 1 subfamily. Homotetramer.

The protein resides in the cytoplasm. It catalyses the reaction L-citrulline + L-aspartate + ATP = 2-(N(omega)-L-arginino)succinate + AMP + diphosphate + H(+). Its pathway is amino-acid biosynthesis; L-arginine biosynthesis; L-arginine from L-ornithine and carbamoyl phosphate: step 2/3. This Bacillus thuringiensis (strain Al Hakam) protein is Argininosuccinate synthase.